Consider the following 674-residue polypeptide: DNA ligase (674 aa).

Residues 35–39 (DAEYD), 84–85 (SL), and E116 contribute to the NAD(+) site. K118 acts as the N6-AMP-lysine intermediate in catalysis. 4 residues coordinate NAD(+): R139, E176, K293, and K317. C411, C414, C429, and C435 together coordinate Zn(2+). Residues 593-674 (DGVKPLEGTT…LLALLEEHGV (82 aa)) enclose the BRCT domain.

It belongs to the NAD-dependent DNA ligase family. LigA subfamily. Requires Mg(2+) as cofactor. Mn(2+) is required as a cofactor.

The catalysed reaction is NAD(+) + (deoxyribonucleotide)n-3'-hydroxyl + 5'-phospho-(deoxyribonucleotide)m = (deoxyribonucleotide)n+m + AMP + beta-nicotinamide D-nucleotide.. DNA ligase that catalyzes the formation of phosphodiester linkages between 5'-phosphoryl and 3'-hydroxyl groups in double-stranded DNA using NAD as a coenzyme and as the energy source for the reaction. It is essential for DNA replication and repair of damaged DNA. This is DNA ligase from Saccharophagus degradans (strain 2-40 / ATCC 43961 / DSM 17024).